The primary structure comprises 488 residues: H2.0-like homeobox protein (488 aa).

Disordered stretches follow at residues 118-173 and 331-488; these read AYHH…SSKD and WRHS…LGCL. 2 stretches are compositionally biased toward low complexity: residues 125 to 135 and 158 to 171; these read QQQQQQQQPQQ and PNPH…APSS. Residues 276–335 constitute a DNA-binding region (homeobox); sequence RSWSRAVFSNLQRKGLEKRFEIQKYVTKPDRKQLAAMLGLTDAQVKVWFQNRRMKWRHSK. Basic and acidic residues-rich tracts occupy residues 334 to 349 and 363 to 372; these read SKEA…EAGE and DERSPSRSEG. Positions 373 to 383 are enriched in acidic residues; it reads EAESESSDSES. Residues 390 to 401 are compositionally biased toward basic and acidic residues; it reads DTERTEGSERSL. The span at 422–432 shows a compositional bias: gly residues; sequence GSGGSSGGGGN. Positions 433 to 454 are enriched in low complexity; sequence SFSFSSASSLSSSSTSAGCASS.

This sequence belongs to the H2.0 homeobox family. As to expression, low level in normal B and T-cells, high level in activated lymphocytes and monocytes. Also found in thymus, tonsil, bone marrow, developing vessels, and fetal brain.

It is found in the nucleus. Its function is as follows. Transcription factor required for TBX21/T-bet-dependent maturation of Th1 cells as well as maintenance of Th1-specific gene expression. Involved in embryogenesis and hematopoiesis. The polypeptide is H2.0-like homeobox protein (HLX) (Homo sapiens (Human)).